The following is a 283-amino-acid chain: MEERAVKLAVYGKGGIGKSTTSCNISVALARRGKKVLQIGCDPKHDSTFTLTGFLIPTIIDTLEAKGYHHEDIYPEDVIYRGYGGVDCVEAGGPPAGAGCGGYVVGETVKLLKELNAFDEYDVILFDVLGDVVCGGFAAPLNYADYCLIVTDNGFDALFAANRIAASVREKAKTRKLRLAGLIGNRTSKRDLIDKYVSAVPMPVIEVLPLIEDIRVSRVKGKTLFEMAETDPSLEPVCQYYLNIADELLARPEGIVPQPAEDRELFALLSDFYNTPARQLALV.

Residues 15 to 20 and lysine 44 contribute to the ATP site; that span reads GIGKST. Serine 19 is a binding site for Mg(2+). Residues cysteine 100 and cysteine 134 each coordinate [4Fe-4S] cluster. 185 to 186 serves as a coordination point for ATP; it reads NR.

Belongs to the NifH/BchL/ChlL family. Homodimer. Protochlorophyllide reductase is composed of three subunits; ChlL, ChlN and ChlB. Requires [4Fe-4S] cluster as cofactor.

The catalysed reaction is chlorophyllide a + oxidized 2[4Fe-4S]-[ferredoxin] + 2 ADP + 2 phosphate = protochlorophyllide a + reduced 2[4Fe-4S]-[ferredoxin] + 2 ATP + 2 H2O. The protein operates within porphyrin-containing compound metabolism; chlorophyll biosynthesis (light-independent). Component of the dark-operative protochlorophyllide reductase (DPOR) that uses Mg-ATP and reduced ferredoxin to reduce ring D of protochlorophyllide (Pchlide) to form chlorophyllide a (Chlide). This reaction is light-independent. The L component serves as a unique electron donor to the NB-component of the complex, and binds Mg-ATP. This chain is Light-independent protochlorophyllide reductase iron-sulfur ATP-binding protein, found in Synechococcus sp. (strain JA-2-3B'a(2-13)) (Cyanobacteria bacterium Yellowstone B-Prime).